Reading from the N-terminus, the 70-residue chain is Large ribosomal subunit protein bL31 (70 aa).

Zn(2+) contacts are provided by cysteine 16, cysteine 18, cysteine 38, and cysteine 41.

It belongs to the bacterial ribosomal protein bL31 family. Type A subfamily. In terms of assembly, part of the 50S ribosomal subunit. It depends on Zn(2+) as a cofactor.

Binds the 23S rRNA. The protein is Large ribosomal subunit protein bL31 of Mycolicibacterium gilvum (strain PYR-GCK) (Mycobacterium gilvum (strain PYR-GCK)).